A 365-amino-acid polypeptide reads, in one-letter code: UDP-N-acetylglucosamine--N-acetylmuramyl-(pentapeptide) pyrophosphoryl-undecaprenol N-acetylglucosamine transferase (365 aa).

Residues 13 to 15 (TGG), Asn125, Arg165, Ser192, and Gln293 each bind UDP-N-acetyl-alpha-D-glucosamine.

This sequence belongs to the glycosyltransferase 28 family. MurG subfamily.

The protein resides in the cell inner membrane. It carries out the reaction di-trans,octa-cis-undecaprenyl diphospho-N-acetyl-alpha-D-muramoyl-L-alanyl-D-glutamyl-meso-2,6-diaminopimeloyl-D-alanyl-D-alanine + UDP-N-acetyl-alpha-D-glucosamine = di-trans,octa-cis-undecaprenyl diphospho-[N-acetyl-alpha-D-glucosaminyl-(1-&gt;4)]-N-acetyl-alpha-D-muramoyl-L-alanyl-D-glutamyl-meso-2,6-diaminopimeloyl-D-alanyl-D-alanine + UDP + H(+). Its pathway is cell wall biogenesis; peptidoglycan biosynthesis. Its function is as follows. Cell wall formation. Catalyzes the transfer of a GlcNAc subunit on undecaprenyl-pyrophosphoryl-MurNAc-pentapeptide (lipid intermediate I) to form undecaprenyl-pyrophosphoryl-MurNAc-(pentapeptide)GlcNAc (lipid intermediate II). The polypeptide is UDP-N-acetylglucosamine--N-acetylmuramyl-(pentapeptide) pyrophosphoryl-undecaprenol N-acetylglucosamine transferase (Ruegeria sp. (strain TM1040) (Silicibacter sp.)).